The following is a 212-amino-acid chain: Regulatory protein RecX (212 aa).

The protein belongs to the RecX family.

The protein resides in the cytoplasm. Its function is as follows. Modulates RecA activity. The polypeptide is Regulatory protein RecX (Clostridium perfringens (strain SM101 / Type A)).